Reading from the N-terminus, the 184-residue chain is UPF0149 protein PSPA7_5968 (184 aa).

This sequence belongs to the UPF0149 family.

This Pseudomonas paraeruginosa (strain DSM 24068 / PA7) (Pseudomonas aeruginosa (strain PA7)) protein is UPF0149 protein PSPA7_5968.